A 158-amino-acid chain; its full sequence is Transcription elongation factor GreA (158 aa).

A coiled-coil region spans residues 3–75; sequence TEKTYPMTQE…TQLENMIRNA (73 aa).

It belongs to the GreA/GreB family.

In terms of biological role, necessary for efficient RNA polymerase transcription elongation past template-encoded arresting sites. The arresting sites in DNA have the property of trapping a certain fraction of elongating RNA polymerases that pass through, resulting in locked ternary complexes. Cleavage of the nascent transcript by cleavage factors such as GreA or GreB allows the resumption of elongation from the new 3'terminus. GreA releases sequences of 2 to 3 nucleotides. The sequence is that of Transcription elongation factor GreA from Bacillus cytotoxicus (strain DSM 22905 / CIP 110041 / 391-98 / NVH 391-98).